A 473-amino-acid polypeptide reads, in one-letter code: T-box transcription factor TBX6L (473 aa).

Positions 43–217 (LWDKFSSIGT…NNPFAKGFRD (175 aa)) form a DNA-binding region, T-box. Residues 342–361 (RLNPQETHHNSRPKIQLQPP) are disordered.

In terms of tissue distribution, exclusively expressed by ventral mesendoderm.

The protein resides in the nucleus. In terms of biological role, probable transcriptional regulator involved in developmental processes. In Danio rerio (Zebrafish), this protein is T-box transcription factor TBX6L (tbx6l).